We begin with the raw amino-acid sequence, 524 residues long: Cytokinin dehydrogenase 4 (524 aa).

Residues 1-26 (MTNTLCLSLITLITLFISLTPTLIKS) form the signal peptide. Residues asparagine 39 and asparagine 58 are each glycosylated (N-linked (GlcNAc...) asparagine). One can recognise an FAD-binding PCMH-type domain in the interval 60-249 (TDENPGAVLC…TRARIALDHA (190 aa)). Residues alanine 104, glycine 106, and glycine 108 each coordinate FAD. A Pros-8alpha-FAD histidine modification is found at histidine 109. Serine 110 and glutamine 114 together coordinate FAD. Asparagine 124 carries N-linked (GlcNAc...) asparagine glycosylation. Positions 173, 178, 184, 188, and 239 each coordinate FAD. A glycan (N-linked (GlcNAc...) asparagine) is linked at asparagine 411. Tyrosine 482, serine 517, and glutamine 520 together coordinate FAD.

This sequence belongs to the oxygen-dependent FAD-linked oxidoreductase family. FAD is required as a cofactor. As to expression, expressed in trichomes and in developing stomata of young growing leaves. Strong expression in stipules and in the root cap, but not detected in the root meristem.

Its subcellular location is the secreted. It is found in the extracellular space. It carries out the reaction N(6)-dimethylallyladenine + A + H2O = 3-methyl-2-butenal + adenine + AH2. Catalyzes the oxidation of cytokinins, a family of N(6)-substituted adenine derivatives that are plant hormones, where the substituent is an isopentenyl group. This is Cytokinin dehydrogenase 4 (CKX4) from Arabidopsis thaliana (Mouse-ear cress).